The sequence spans 281 residues: MARSNLNVSGIEIANDRPFVLFGGMNVLESRELAFEVAEKYVDVCTRLGIPYVFKASFDKANRSSVNSFRGPGLEKGLQILADIKSKFGVPIISDVHEPGQAAPAAEVCDIIQLPAFLSRQTDLVVAMAKTGAVINIKKAQFLAPQEMKHIITKCEEAGNDQIILCERGTSFGYNNLVVDMLGFGIMKQMNVPVFFDVTHALQMPGGRADSAGGRRAQVTDLALAGMSQGLAGLFLEAHPDPDKARCDGPCALRLSQLEPFLERVKAVDDLVKSFKPIDTA.

Belongs to the KdsA family.

The protein resides in the cytoplasm. It carries out the reaction D-arabinose 5-phosphate + phosphoenolpyruvate + H2O = 3-deoxy-alpha-D-manno-2-octulosonate-8-phosphate + phosphate. The protein operates within carbohydrate biosynthesis; 3-deoxy-D-manno-octulosonate biosynthesis; 3-deoxy-D-manno-octulosonate from D-ribulose 5-phosphate: step 2/3. Its pathway is bacterial outer membrane biogenesis; lipopolysaccharide biosynthesis. The polypeptide is 2-dehydro-3-deoxyphosphooctonate aldolase (Marinobacter nauticus (strain ATCC 700491 / DSM 11845 / VT8) (Marinobacter aquaeolei)).